Consider the following 355-residue polypeptide: RNA 3'-terminal phosphate cyclase (355 aa).

Residues Gln-100 and His-300–Gln-304 contribute to the ATP site. Residue His-325 is the Tele-AMP-histidine intermediate of the active site.

Belongs to the RNA 3'-terminal cyclase family. Type 1 subfamily.

Its subcellular location is the cytoplasm. It catalyses the reaction a 3'-end 3'-phospho-ribonucleotide-RNA + ATP = a 3'-end 2',3'-cyclophospho-ribonucleotide-RNA + AMP + diphosphate. Its function is as follows. Catalyzes the conversion of 3'-phosphate to a 2',3'-cyclic phosphodiester at the end of RNA. The mechanism of action of the enzyme occurs in 3 steps: (A) adenylation of the enzyme by ATP; (B) transfer of adenylate to an RNA-N3'P to produce RNA-N3'PP5'A; (C) and attack of the adjacent 2'-hydroxyl on the 3'-phosphorus in the diester linkage to produce the cyclic end product. The biological role of this enzyme is unknown but it is likely to function in some aspects of cellular RNA processing. The chain is RNA 3'-terminal phosphate cyclase from Methanosarcina acetivorans (strain ATCC 35395 / DSM 2834 / JCM 12185 / C2A).